Here is a 447-residue protein sequence, read N- to C-terminus: Probable glycosyltransferase 7 (447 aa).

A disordered region spans residues 1 to 31 (MRATTGARHLHPPWRRGLRHHRQSTMPPRAS). The Cytoplasmic portion of the chain corresponds to 1–37 (MRATTGARHLHPPWRRGLRHHRQSTMPPRASRGRLAD). Over residues 8-23 (RHLHPPWRRGLRHHRQ) the composition is skewed to basic residues. Residues 38-60 (AALFTAGAVLGSVLLLTLASPFS) traverse the membrane as a helical; Signal-anchor for type II membrane protein segment. Topologically, residues 61 to 447 (SSSSPSSGVG…LPFDHPTQTA (387 aa)) are lumenal. N-linked (GlcNAc...) asparagine glycosylation is found at asparagine 285 and asparagine 329.

It belongs to the glycosyltransferase 34 family.

It is found in the golgi apparatus membrane. Probable glycosyltransferase that may be involved in the biosynthesis of xyloglucan. This is Probable glycosyltransferase 7 from Oryza sativa subsp. indica (Rice).